The chain runs to 259 residues: Proteasome subunit alpha (259 aa).

A disordered region spans residues 222–259; the sequence is RITGPALEQLIPAEPAPASEPAPESKPDTETKPADPQD. Over residues 244–259 the composition is skewed to basic and acidic residues; that stretch reads PESKPDTETKPADPQD.

This sequence belongs to the peptidase T1A family. In terms of assembly, the 20S proteasome core is composed of 14 alpha and 14 beta subunits that assemble into four stacked heptameric rings, resulting in a barrel-shaped structure. The two inner rings, each composed of seven catalytic beta subunits, are sandwiched by two outer rings, each composed of seven alpha subunits. The catalytic chamber with the active sites is on the inside of the barrel. Has a gated structure, the ends of the cylinder being occluded by the N-termini of the alpha-subunits. Is capped by the proteasome-associated ATPase, ARC.

The protein localises to the cytoplasm. It participates in protein degradation; proteasomal Pup-dependent pathway. With respect to regulation, the formation of the proteasomal ATPase ARC-20S proteasome complex, likely via the docking of the C-termini of ARC into the intersubunit pockets in the alpha-rings, may trigger opening of the gate for substrate entry. Interconversion between the open-gate and close-gate conformations leads to a dynamic regulation of the 20S proteasome proteolysis activity. Its function is as follows. Component of the proteasome core, a large protease complex with broad specificity involved in protein degradation. This is Proteasome subunit alpha from Rhodococcus jostii (strain RHA1).